The sequence spans 399 residues: Tyrosine--tRNA ligase (399 aa).

Tyr36 serves as a coordination point for L-tyrosine. The 'HIGH' region signature appears at 41 to 50 (PTAPSLHIGN). Tyr166 and Gln170 together coordinate L-tyrosine. A 'KMSKS' region motif is present at residues 226 to 230 (KMGKS). Residue Lys229 participates in ATP binding. Positions 332–395 (TRLVDVIVDL…KKRFVTVQVI (64 aa)) constitute an S4 RNA-binding domain.

The protein belongs to the class-I aminoacyl-tRNA synthetase family. TyrS type 1 subfamily. In terms of assembly, homodimer.

The protein localises to the cytoplasm. It catalyses the reaction tRNA(Tyr) + L-tyrosine + ATP = L-tyrosyl-tRNA(Tyr) + AMP + diphosphate + H(+). In terms of biological role, catalyzes the attachment of tyrosine to tRNA(Tyr) in a two-step reaction: tyrosine is first activated by ATP to form Tyr-AMP and then transferred to the acceptor end of tRNA(Tyr). This is Tyrosine--tRNA ligase from Mycoplasma pneumoniae (strain ATCC 29342 / M129 / Subtype 1) (Mycoplasmoides pneumoniae).